A 790-amino-acid polypeptide reads, in one-letter code: Lysine biosynthesis regulatory protein LYS14 (790 aa).

2 disordered regions span residues 1 to 50 and 72 to 157; these read MFES…SCFE and FNHK…YSRN. The segment covering 35-47 has biased composition (low complexity); that stretch reads SGSSFTNSGTSTS. Polar residues-rich tracts occupy residues 75 to 113 and 120 to 142; these read KQMT…SEQD and TISQ…TSTV. Residues 159-186 constitute a DNA-binding region (zn(2)-C6 fungal-type); that stretch reads CSECKRRRMKCDETKPTCWQCARLNRQC. Positions 195-258 are disordered; it reads KKRRTSNAQR…PKPITDNGKN (64 aa). Over residues 222–239 the composition is skewed to basic residues; it reads ARKRQHSSCKAEKKKKVR.

It is found in the nucleus. Its function is as follows. Activates the transcription of lysine biosynthesis genes. This activation is dependent on the inducer alpha-aminoadipate semialdehyde and repressed by lysine. The polypeptide is Lysine biosynthesis regulatory protein LYS14 (LYS14) (Saccharomyces cerevisiae (strain ATCC 204508 / S288c) (Baker's yeast)).